The following is a 192-amino-acid chain: Large ribosomal subunit protein bL25 (192 aa).

The protein belongs to the bacterial ribosomal protein bL25 family. CTC subfamily. In terms of assembly, part of the 50S ribosomal subunit; part of the 5S rRNA/L5/L18/L25 subcomplex. Contacts the 5S rRNA. Binds to the 5S rRNA independently of L5 and L18.

Functionally, this is one of the proteins that binds to the 5S RNA in the ribosome where it forms part of the central protuberance. The chain is Large ribosomal subunit protein bL25 from Cytophaga hutchinsonii (strain ATCC 33406 / DSM 1761 / CIP 103989 / NBRC 15051 / NCIMB 9469 / D465).